The chain runs to 666 residues: UvrABC system protein B (666 aa).

In terms of domain architecture, Helicase ATP-binding spans 28–171 (NNINQGIQRQ…YLHVGELIEF (144 aa)). 41 to 48 (GATGTGKT) is an ATP binding site. The Beta-hairpin motif lies at 94–117 (YFDYYQPEAYKPITDTYIEKDSVT). A Helicase C-terminal domain is found at 436–598 (QIDDLINELM…IIPKTIIKPI (163 aa)). Positions 624–659 (NQKIKELKKKMEEAAKKREYEVAAQYRDMIVELEAI) constitute a UVR domain.

The protein belongs to the UvrB family. Forms a heterotetramer with UvrA during the search for lesions. Interacts with UvrC in an incision complex.

Its subcellular location is the cytoplasm. The UvrABC repair system catalyzes the recognition and processing of DNA lesions. A damage recognition complex composed of 2 UvrA and 2 UvrB subunits scans DNA for abnormalities. Upon binding of the UvrA(2)B(2) complex to a putative damaged site, the DNA wraps around one UvrB monomer. DNA wrap is dependent on ATP binding by UvrB and probably causes local melting of the DNA helix, facilitating insertion of UvrB beta-hairpin between the DNA strands. Then UvrB probes one DNA strand for the presence of a lesion. If a lesion is found the UvrA subunits dissociate and the UvrB-DNA preincision complex is formed. This complex is subsequently bound by UvrC and the second UvrB is released. If no lesion is found, the DNA wraps around the other UvrB subunit that will check the other stand for damage. The protein is UvrABC system protein B of Ureaplasma parvum serovar 3 (strain ATCC 27815 / 27 / NCTC 11736).